The following is a 102-amino-acid chain: Urease subunit beta (102 aa).

This sequence belongs to the urease beta subunit family. As to quaternary structure, heterotrimer of UreA (gamma), UreB (beta) and UreC (alpha) subunits. Three heterotrimers associate to form the active enzyme.

The protein resides in the cytoplasm. The enzyme catalyses urea + 2 H2O + H(+) = hydrogencarbonate + 2 NH4(+). It functions in the pathway nitrogen metabolism; urea degradation; CO(2) and NH(3) from urea (urease route): step 1/1. This Bordetella parapertussis (strain 12822 / ATCC BAA-587 / NCTC 13253) protein is Urease subunit beta.